The primary structure comprises 266 residues: Non-structural maintenance of chromosomes element 1 homolog (266 aa).

An interaction with NSMCE3 region spans residues 1–102 (MQGSTRRMSV…SISKMATDFA (102 aa)). Residues 191–232 (CNICHSLLIQGQSCETCGIRMHLPCVAKYFQSNAEPRCPHCN) form an RING-type; atypical zinc finger. The segment at 245-266 (PEKERESGVSKSNKKSLRSRQH) is disordered. A Phosphoserine modification is found at Ser-251. Residues 256–266 (SNKKSLRSRQH) are compositionally biased toward basic residues.

Belongs to the NSE1 family. In terms of assembly, component of the SMC5-SMC6 complex which consists at least of SMC5, SMC6, NSMCE2, NSMCE1, NSMCE4A or EID3 and NSMCE3. NSMCE1, NSMCE4A or EID3 and NSMCE3 probably form a subcomplex that bridges the head domains of the SMC5-SMC6 heterodimer. Interacts with NSMCE3. Ubiquitinated.

The protein localises to the nucleus. Its subcellular location is the chromosome. It localises to the telomere. The catalysed reaction is S-ubiquitinyl-[E2 ubiquitin-conjugating enzyme]-L-cysteine + [acceptor protein]-L-lysine = [E2 ubiquitin-conjugating enzyme]-L-cysteine + N(6)-ubiquitinyl-[acceptor protein]-L-lysine.. Its function is as follows. RING-type zinc finger-containing E3 ubiquitin ligase that assembles with melanoma antigen protein (MAGE) to catalyze the direct transfer of ubiquitin from E2 ubiquitin-conjugating enzyme to a specific substrate. Within MAGE-RING ubiquitin ligase complex, MAGE stimulates and specifies ubiquitin ligase activity likely through recruitment and/or stabilization of the E2 ubiquitin-conjugating enzyme at the E3:substrate complex. Involved in maintenance of genome integrity, DNA damage response and DNA repair. NSMCE3/MAGEG1 and NSMCE1 ubiquitin ligase are components of SMC5-SMC6 complex and may positively regulate homologous recombination-mediated DNA repair. The polypeptide is Non-structural maintenance of chromosomes element 1 homolog (NSMCE1) (Pongo abelii (Sumatran orangutan)).